The following is a 262-amino-acid chain: Intron-encoded DNA endonuclease ai2b (262 aa).

This sequence belongs to the LAGLIDADG endonuclease family.

It is found in the mitochondrion. Its function is as follows. Mitochondrial DNA endonuclease involved in intron homing. The protein is Intron-encoded DNA endonuclease ai2b (ai2b) of Dictyostelium discoideum (Social amoeba).